A 119-amino-acid chain; its full sequence is Large ribosomal subunit protein bL20 (119 aa).

Belongs to the bacterial ribosomal protein bL20 family.

Its function is as follows. Binds directly to 23S ribosomal RNA and is necessary for the in vitro assembly process of the 50S ribosomal subunit. It is not involved in the protein synthesizing functions of that subunit. This Shewanella sediminis (strain HAW-EB3) protein is Large ribosomal subunit protein bL20.